The following is a 410-amino-acid chain: Translation initiation factor 2 subunit gamma (410 aa).

One can recognise a tr-type G domain in the interval 6–203 (QSEVNIGMVG…AIQDFIPTPE (198 aa)). The interval 15–22 (GHVDHGKT) is G1. Residues aspartate 18, threonine 22, glycine 43, and serine 45 each contribute to the Mg(2+) site. 18-23 (DHGKTS) is a binding site for GTP. Residues 43-47 (GISIR) are G2. Zn(2+) contacts are provided by cysteine 58, cysteine 61, cysteine 73, and cysteine 76. The segment at 90 to 93 (DAPG) is G3. Residues 146-149 (NKID) and 181-183 (SAH) contribute to the GTP site. Residues 146–149 (NKID) are G4. Residues 181–183 (SAH) are G5.

The protein belongs to the TRAFAC class translation factor GTPase superfamily. Classic translation factor GTPase family. EIF2G subfamily. In terms of assembly, heterotrimer composed of an alpha, a beta and a gamma chain. Requires Mg(2+) as cofactor.

The catalysed reaction is GTP + H2O = GDP + phosphate + H(+). Its function is as follows. eIF-2 functions in the early steps of protein synthesis by forming a ternary complex with GTP and initiator tRNA. The chain is Translation initiation factor 2 subunit gamma from Methanococcus maripaludis (strain DSM 14266 / JCM 13030 / NBRC 101832 / S2 / LL).